A 257-amino-acid chain; its full sequence is Enterotoxin type A (257 aa).

Positions 1 to 27 (MKKTAFILLLFIALTWTTSPLVNGSEK) are cleaved as a signal peptide. The cysteines at positions 120 and 130 are disulfide-linked. His-211, His-249, and Asp-251 together coordinate Zn(2+).

Belongs to the staphylococcal/streptococcal toxin family. In terms of assembly, monomer. Interacts with MHC class II molecules alpha/HLA-DRB1 and beta/HLA-DRA chains. The interaction with MHC-II molecules occurs at both zinc-dependent and zinc-independent sites. Interacts with T-cell receptor beta variable 7-9/TRBV7-9. Zn(2+) is required as a cofactor.

It localises to the secreted. Functionally, staphylococcal enterotoxin that activates the host immune system by binding as unprocessed molecules to major histocompatibility (MHC) complex class II and T-cell receptor (TCR) molecules. In turn, waves of cellular activation, cytokine production, and migration into the lung tissue and airways occur via alphabeta T-cells. Also causes the intoxication staphylococcal food poisoning syndrome. The illness is characterized by high fever, hypotension, diarrhea, shock, and in some cases death. This chain is Enterotoxin type A (sea), found in Staphylococcus aureus (strain Newman).